The following is a 111-amino-acid chain: 4'-hydroxy-3'-methoxypropiophenone carrier protein ppsC (111 aa).

The segment at 1–21 (MSAQVMRPGTPQHEGQEFLSG) is disordered.

It participates in secondary metabolite biosynthesis. Its function is as follows. 4'-hydroxy-3'-methoxypropiophenone carrier protein; part of the gene cluster that mediates the biosynthesis of 2,4'-dihydroxy-3'-methoxypropiophenone. The first step of the pathway is the conversion of acetate into acetyl-CoA by the acyl-CoA ligase ppsA. Acetyl-CoA is then used as a starter unit by the polyketide synthase ppsB and condensed with 4 malonyl-CoA unit to produce the pentaketide backbone. During polyketide extension, the polykedite chain is probably reduced and dehydrated by the KR and PT domains, respectively. O-methylation seems to be catalyzed by an unknown methyltransferase rather than by the CMeT domain of ppsB. Two hydroxylations and one further decarboxylation step catalyzed by yet unknown enzymes are then required to yield 4'-hydroxy-3'-methoxypropiophenone. PpsC functions as a carrier protein to transport 4'-hydroxy-3'-methoxypropiophenone to a specific cell compartment in which 4'-hydroxy-3'-methoxypropiophenone is hydroxylated to 2,4'-dihydroxy-3'-methoxypropiophenone by a still to be identified enzyme. This chain is 4'-hydroxy-3'-methoxypropiophenone carrier protein ppsC, found in Aspergillus oryzae (strain ATCC 42149 / RIB 40) (Yellow koji mold).